We begin with the raw amino-acid sequence, 383 residues long: Methenyltetrahydrofolate synthase domain-containing protein (383 aa).

The tract at residues 249 to 301 is disordered; the sequence is AGKDVTLQGEHQHLPEPGCQQTVPLSVGRRPPDTPGPETNSMEAAPGSPPGEG. An RRM domain is found at 306–379; that stretch reads ADVYVGNLPG…DTLRVALARQ (74 aa).

The protein is Methenyltetrahydrofolate synthase domain-containing protein (MTHFSD) of Homo sapiens (Human).